Here is a 417-residue protein sequence, read N- to C-terminus: 4-hydroxy-3-methylbut-2-enyl diphosphate reductase (417 aa).

Residue Cys-56 participates in [4Fe-4S] cluster binding. Residue His-86 coordinates (2E)-4-hydroxy-3-methylbut-2-enyl diphosphate. His-86 lines the dimethylallyl diphosphate pocket. His-86 contacts isopentenyl diphosphate. Position 151 (Cys-151) interacts with [4Fe-4S] cluster. His-179 lines the (2E)-4-hydroxy-3-methylbut-2-enyl diphosphate pocket. His-179 contacts dimethylallyl diphosphate. His-179 is a binding site for isopentenyl diphosphate. The active-site Proton donor is Glu-181. (2E)-4-hydroxy-3-methylbut-2-enyl diphosphate is bound at residue Thr-244. Residue Cys-282 coordinates [4Fe-4S] cluster. (2E)-4-hydroxy-3-methylbut-2-enyl diphosphate contacts are provided by Ser-311, Ser-312, Asn-313, and Ser-374. Dimethylallyl diphosphate-binding residues include Ser-311, Ser-312, Asn-313, and Ser-374. The isopentenyl diphosphate site is built by Ser-311, Ser-312, Asn-313, and Ser-374.

It belongs to the IspH family. The cofactor is [4Fe-4S] cluster.

It catalyses the reaction isopentenyl diphosphate + 2 oxidized [2Fe-2S]-[ferredoxin] + H2O = (2E)-4-hydroxy-3-methylbut-2-enyl diphosphate + 2 reduced [2Fe-2S]-[ferredoxin] + 2 H(+). The enzyme catalyses dimethylallyl diphosphate + 2 oxidized [2Fe-2S]-[ferredoxin] + H2O = (2E)-4-hydroxy-3-methylbut-2-enyl diphosphate + 2 reduced [2Fe-2S]-[ferredoxin] + 2 H(+). It functions in the pathway isoprenoid biosynthesis; dimethylallyl diphosphate biosynthesis; dimethylallyl diphosphate from (2E)-4-hydroxy-3-methylbutenyl diphosphate: step 1/1. The protein operates within isoprenoid biosynthesis; isopentenyl diphosphate biosynthesis via DXP pathway; isopentenyl diphosphate from 1-deoxy-D-xylulose 5-phosphate: step 6/6. In terms of biological role, catalyzes the conversion of 1-hydroxy-2-methyl-2-(E)-butenyl 4-diphosphate (HMBPP) into a mixture of isopentenyl diphosphate (IPP) and dimethylallyl diphosphate (DMAPP). Acts in the terminal step of the DOXP/MEP pathway for isoprenoid precursor biosynthesis. In Gloeobacter violaceus (strain ATCC 29082 / PCC 7421), this protein is 4-hydroxy-3-methylbut-2-enyl diphosphate reductase.